Reading from the N-terminus, the 529-residue chain is Delayed-rectifier potassium channel regulatory subunit KCNS1 (529 aa).

Topologically, residues 1 to 217 (MLMLLVRGTR…LTMENPGYSL (217 aa)) are cytoplasmic. The helical transmembrane segment at 218 to 239 (PSKLFSCVSISVVLASIAAMCI) threads the bilayer. Topologically, residues 240–270 (HSLPEYQAREAAAAVAAVAAGRSPEGVRDDP) are extracellular. The helical transmembrane segment at 271 to 293 (VLRRLEYFCIAWFSFEVSSRLLL) threads the bilayer. Over 294–304 (APSTRNFFCHP) the chain is Cytoplasmic. Residues 305-322 (LNLIDIVSVLPFYLTLLA) form a helical membrane-spanning segment. The Extracellular segment spans residues 323–340 (GVALGDQGGTGGKELGHL). A helical; Voltage-sensor transmembrane segment spans residues 341–361 (GKVVQVFRLMRIFRVLKLARH). The Cytoplasmic portion of the chain corresponds to 362 to 376 (STGLRSLGATLKHSY). The chain crosses the membrane as a helical span at residues 377–398 (REVGILLLYLAVGVSVFSGVAY). Residues 399–411 (TAEKEEDVGFNTI) lie on the Extracellular side of the membrane. Residues 412–423 (PACWWWGTVSMT) constitute an intramembrane region (helical). A Selectivity filter motif is present at residues 424 to 429 (TVGYGD). Residues 424–431 (TVGYGDVV) lie within the membrane without spanning it. Residues 432-438 (PVTVAGK) are Extracellular-facing. Residues 439–467 (LAASGCILGGILVVALPITIIFNKFSHFY) traverse the membrane as a helical segment. Topologically, residues 468–529 (RRQKALEAAV…PSEPPHPQMY (62 aa)) are cytoplasmic. The interval 500–529 (LETSREISQEGRSADLETQAPSEPPHPQMY) is disordered. Residues 502–514 (TSREISQEGRSAD) are compositionally biased toward basic and acidic residues.

Belongs to the potassium channel family. S (TC 1.A.1.2) subfamily. Kv9.1/KCNS1 sub-subfamily. As to quaternary structure, heterotetramer with KCNB1. Heterotetramer with KCNB2. Does not form homomultimers.

The protein resides in the cell membrane. In terms of biological role, potassium channel regulatory subunit that modulate the delayed rectifier voltage-gated potassium channel activity of KCNB1 and KCNB2 by altering their kinetics, expression levels, and shifting the half-inactivation potential to more polarized values. While it does not form functional channels on its own, it can form functional heterotetrameric channels with KCNB1 and KCNB2. Each regulatory subunit has unique regulatory properties that can lead to extensive inhibition, significant changes in kinetics, and/or substantial shifts in the voltage dependencies of the inactivation process. In Colobus guereza (Mantled guereza), this protein is Delayed-rectifier potassium channel regulatory subunit KCNS1.